Reading from the N-terminus, the 312-residue chain is HPr kinase/phosphorylase (312 aa).

Catalysis depends on residues His-139 and Lys-160. 154–161 (GDSGIGKS) lines the ATP pocket. Residue Ser-161 coordinates Mg(2+). Asp-178 (proton acceptor; for phosphorylation activity. Proton donor; for dephosphorylation activity) is an active-site residue. An important for the catalytic mechanism of both phosphorylation and dephosphorylation region spans residues 202–211 (IEIRGVGIID). Glu-203 contributes to the Mg(2+) binding site. Residue Arg-244 is part of the active site. The interval 265 to 270 (PVKTGR) is important for the catalytic mechanism of dephosphorylation.

The protein belongs to the HPrK/P family. Homohexamer. Mg(2+) is required as a cofactor.

It catalyses the reaction [HPr protein]-L-serine + ATP = [HPr protein]-O-phospho-L-serine + ADP + H(+). It carries out the reaction [HPr protein]-O-phospho-L-serine + phosphate + H(+) = [HPr protein]-L-serine + diphosphate. Functionally, catalyzes the ATP- as well as the pyrophosphate-dependent phosphorylation of a specific serine residue in HPr, a phosphocarrier protein of the phosphoenolpyruvate-dependent sugar phosphotransferase system (PTS). HprK/P also catalyzes the pyrophosphate-producing, inorganic phosphate-dependent dephosphorylation (phosphorolysis) of seryl-phosphorylated HPr (P-Ser-HPr). The two antagonistic activities of HprK/P are regulated by several intracellular metabolites, which change their concentration in response to the absence or presence of rapidly metabolisable carbon sources (glucose, fructose, etc.) in the growth medium. Therefore, by controlling the phosphorylation state of HPr, HPrK/P is a sensor enzyme that plays a major role in the regulation of carbon metabolism and sugar transport: it mediates carbon catabolite repression (CCR), and regulates PTS-catalyzed carbohydrate uptake and inducer exclusion. This is HPr kinase/phosphorylase from Streptococcus pneumoniae serotype 4 (strain ATCC BAA-334 / TIGR4).